A 425-amino-acid polypeptide reads, in one-letter code: Histidine--tRNA ligase (425 aa).

This sequence belongs to the class-II aminoacyl-tRNA synthetase family. As to quaternary structure, homodimer.

The protein localises to the cytoplasm. The catalysed reaction is tRNA(His) + L-histidine + ATP = L-histidyl-tRNA(His) + AMP + diphosphate + H(+). The protein is Histidine--tRNA ligase of Shewanella sp. (strain W3-18-1).